The primary structure comprises 598 residues: NADH-quinone oxidoreductase subunit C/D (598 aa).

Positions Met1–Glu189 are NADH dehydrogenase I subunit C. Residues Asp213–Arg598 are NADH dehydrogenase I subunit D.

It in the N-terminal section; belongs to the complex I 30 kDa subunit family. This sequence in the C-terminal section; belongs to the complex I 49 kDa subunit family. In terms of assembly, NDH-1 is composed of 13 different subunits. Subunits NuoB, CD, E, F, and G constitute the peripheral sector of the complex.

The protein localises to the cell inner membrane. The catalysed reaction is a quinone + NADH + 5 H(+)(in) = a quinol + NAD(+) + 4 H(+)(out). Its function is as follows. NDH-1 shuttles electrons from NADH, via FMN and iron-sulfur (Fe-S) centers, to quinones in the respiratory chain. The immediate electron acceptor for the enzyme in this species is believed to be ubiquinone. Couples the redox reaction to proton translocation (for every two electrons transferred, four hydrogen ions are translocated across the cytoplasmic membrane), and thus conserves the redox energy in a proton gradient. The sequence is that of NADH-quinone oxidoreductase subunit C/D from Yersinia enterocolitica serotype O:8 / biotype 1B (strain NCTC 13174 / 8081).